The following is a 397-amino-acid chain: Probable N-succinyldiaminopimelate aminotransferase DapC (397 aa).

Pyridoxal 5'-phosphate is bound by residues glycine 109 to serine 110 and aspartate 218 to glutamate 222. Lysine 232 is subject to N6-(pyridoxal phosphate)lysine.

This sequence belongs to the class-III pyridoxal-phosphate-dependent aminotransferase family. Homodimer. It depends on pyridoxal 5'-phosphate as a cofactor.

It localises to the cytoplasm. The catalysed reaction is N-succinyl-(2S,6S)-2,6-diaminopimelate + 2-oxoglutarate = (S)-2-succinylamino-6-oxoheptanedioate + L-glutamate. The protein operates within amino-acid biosynthesis; L-lysine biosynthesis via DAP pathway; LL-2,6-diaminopimelate from (S)-tetrahydrodipicolinate (succinylase route): step 2/3. Functionally, involved in the lysine biosynthetic pathways. It catalyzes the transfer of an amino group from L-glutamate to N-succinyl-2-l-amino-6-oxoheptanedioate (N-succinyl-2-l-amino-6-ketopimelate) in a PLP-dependent reaction, yielding as products N-succinyl-l-2,6-diaminoheptanedioate (N-succinyl-diaminopimelate) and 2-oxoglutarate. In Mycobacterium tuberculosis (strain CDC 1551 / Oshkosh), this protein is Probable N-succinyldiaminopimelate aminotransferase DapC (dapC).